The following is a 123-amino-acid chain: NADH-quinone oxidoreductase subunit A (123 aa).

The next 3 helical transmembrane spans lie at 11–31 (YLPIAIFFGIAVLVSGLIMML), 68–88 (LVAILFIIFDLEITFLVPWAI), and 93–113 (IGKIGFFSMMFFLFVLIIGFI).

It belongs to the complex I subunit 3 family. NDH-1 is composed of 14 different subunits. Subunits NuoA, H, J, K, L, M, N constitute the membrane sector of the complex.

It localises to the cell inner membrane. The catalysed reaction is a quinone + NADH + 5 H(+)(in) = a quinol + NAD(+) + 4 H(+)(out). In terms of biological role, NDH-1 shuttles electrons from NADH, via FMN and iron-sulfur (Fe-S) centers, to quinones in the respiratory chain. The immediate electron acceptor for the enzyme in this species is believed to be ubiquinone. Couples the redox reaction to proton translocation (for every two electrons transferred, four hydrogen ions are translocated across the cytoplasmic membrane), and thus conserves the redox energy in a proton gradient. The chain is NADH-quinone oxidoreductase subunit A from Rickettsia typhi (strain ATCC VR-144 / Wilmington).